Reading from the N-terminus, the 880-residue chain is MSSNPQHLSGNEIRTRFLDFYAQRGHQILASASLVPEDPTVLLTIAGMLPFKPIFLGQRTPEFKRATTSQKCIRTNDIENVGRTKRHQTFFEMLGNFSFGDYFKEQAIAWGWEISTEVFGLPKERLVVSVFEEDDEAYVIWRDQIGVTEARIKRMGADDNFWVSGPTGPCGPCSEIYYDFHPERGDENIDLEDDTRFIEFYNLVFMQYNRDASGNLTPLQNKNIDTGMGLERITQILQQVPNNYETDLIFPIIETAAKIAGIDYHSSDETTKVSLKVIGDHVRSVVHMIADEIRASNVGRGYVLRRLIRRVVRHGRLIGISGEFINQVAERAIALSESAYPNVRKRETVIKAELEREEANFLKTLDRGEKLLEEIIQQVKKQGQTIISGESAFTLYDTYGFPLELTQEIAEENNLTVDEDDFNVEMQKQVERAKAAHETIDLTVQGSLDKLAEHIHATEFIGYSQATATAKVEVLLVDGVVQEEAEAGTEVQIVLDKTPFYAESGGQIGDRGYISGDGIVVQVEDVKKESDFFVHFGRIERGTLRVGDSVTAQIDRAGRRRAQANHTATHLLQAALKTIVDGGISQAGSLVSFDRLRFDFNSPRGLTAEEIQQVEEQINTWIAEAHSAKIEVLPLAEAKARGAVAMFGEKYGDEVRVIDFPGVSMELCGGTHVSNTAEIGVFKIISEAGVASGVRRIEAVSGLAVLDYLNVRDKVVKDLSDRFKVKPEELPERITTLQNELRTTEKQLETLKGQLAIAKSDSLLQTADTLGDHKIIVAQLEGVDPESLKSAAERLLQKIGNGAVVLGSVPEADKVSLVAAFSPEVNKKGLQAGKFIGAIAKICGGGGGGRPNLAQAGGRDASKLPTALEQAQSELKSALG.

4 residues coordinate Zn(2+): histidine 566, histidine 570, cysteine 668, and histidine 672.

This sequence belongs to the class-II aminoacyl-tRNA synthetase family. The cofactor is Zn(2+).

Its subcellular location is the cytoplasm. It carries out the reaction tRNA(Ala) + L-alanine + ATP = L-alanyl-tRNA(Ala) + AMP + diphosphate. In terms of biological role, catalyzes the attachment of alanine to tRNA(Ala) in a two-step reaction: alanine is first activated by ATP to form Ala-AMP and then transferred to the acceptor end of tRNA(Ala). Also edits incorrectly charged Ser-tRNA(Ala) and Gly-tRNA(Ala) via its editing domain. The protein is Alanine--tRNA ligase of Trichormus variabilis (strain ATCC 29413 / PCC 7937) (Anabaena variabilis).